A 261-amino-acid polypeptide reads, in one-letter code: Segregation and condensation protein A (261 aa).

This sequence belongs to the ScpA family. In terms of assembly, component of a cohesin-like complex composed of ScpA, ScpB and the Smc homodimer, in which ScpA and ScpB bind to the head domain of Smc. The presence of the three proteins is required for the association of the complex with DNA.

The protein localises to the cytoplasm. Participates in chromosomal partition during cell division. May act via the formation of a condensin-like complex containing Smc and ScpB that pull DNA away from mid-cell into both cell halves. The chain is Segregation and condensation protein A from Ligilactobacillus salivarius (strain UCC118) (Lactobacillus salivarius).